The primary structure comprises 435 residues: Adenylosuccinate lyase (435 aa).

Residues 4 to 5 (RY), 73 to 75 (RHD), and 99 to 100 (TS) contribute to the N(6)-(1,2-dicarboxyethyl)-AMP site. Catalysis depends on H147, which acts as the Proton donor/acceptor. Q218 is a N(6)-(1,2-dicarboxyethyl)-AMP binding site. The active-site Proton donor/acceptor is the S268. Residues S269, 274 to 276 (KKN), N282, and 313 to 317 (SAERV) each bind N(6)-(1,2-dicarboxyethyl)-AMP.

This sequence belongs to the lyase 1 family. Adenylosuccinate lyase subfamily. Homotetramer. Residues from neighboring subunits contribute catalytic and substrate-binding residues to each active site.

It catalyses the reaction N(6)-(1,2-dicarboxyethyl)-AMP = fumarate + AMP. The enzyme catalyses (2S)-2-[5-amino-1-(5-phospho-beta-D-ribosyl)imidazole-4-carboxamido]succinate = 5-amino-1-(5-phospho-beta-D-ribosyl)imidazole-4-carboxamide + fumarate. It functions in the pathway purine metabolism; AMP biosynthesis via de novo pathway; AMP from IMP: step 2/2. Its pathway is purine metabolism; IMP biosynthesis via de novo pathway; 5-amino-1-(5-phospho-D-ribosyl)imidazole-4-carboxamide from 5-amino-1-(5-phospho-D-ribosyl)imidazole-4-carboxylate: step 2/2. In terms of biological role, catalyzes two reactions in de novo purine nucleotide biosynthesis. Catalyzes the breakdown of 5-aminoimidazole- (N-succinylocarboxamide) ribotide (SAICAR or 2-[5-amino-1-(5-phospho-beta-D-ribosyl)imidazole-4-carboxamido]succinate) to 5-aminoimidazole-4-carboxamide ribotide (AICAR or 5-amino-1-(5-phospho-beta-D-ribosyl)imidazole-4-carboxamide) and fumarate, and of adenylosuccinate (ADS or N(6)-(1,2-dicarboxyethyl)-AMP) to adenosine monophosphate (AMP) and fumarate. In Deinococcus radiodurans (strain ATCC 13939 / DSM 20539 / JCM 16871 / CCUG 27074 / LMG 4051 / NBRC 15346 / NCIMB 9279 / VKM B-1422 / R1), this protein is Adenylosuccinate lyase (purB).